The primary structure comprises 208 residues: Protein-L-isoaspartate O-methyltransferase (208 aa).

Ser-59 is a catalytic residue.

This sequence belongs to the methyltransferase superfamily. L-isoaspartyl/D-aspartyl protein methyltransferase family.

It is found in the cytoplasm. The enzyme catalyses [protein]-L-isoaspartate + S-adenosyl-L-methionine = [protein]-L-isoaspartate alpha-methyl ester + S-adenosyl-L-homocysteine. Functionally, catalyzes the methyl esterification of L-isoaspartyl residues in peptides and proteins that result from spontaneous decomposition of normal L-aspartyl and L-asparaginyl residues. It plays a role in the repair and/or degradation of damaged proteins. This is Protein-L-isoaspartate O-methyltransferase from Yersinia enterocolitica serotype O:8 / biotype 1B (strain NCTC 13174 / 8081).